Consider the following 445-residue polypeptide: Phosphoglucosamine mutase (445 aa).

S101 (phosphoserine intermediate) is an active-site residue. S101, D240, D242, and D244 together coordinate Mg(2+). Position 101 is a phosphoserine (S101).

The protein belongs to the phosphohexose mutase family. The cofactor is Mg(2+). In terms of processing, activated by phosphorylation.

The enzyme catalyses alpha-D-glucosamine 1-phosphate = D-glucosamine 6-phosphate. Catalyzes the conversion of glucosamine-6-phosphate to glucosamine-1-phosphate. The polypeptide is Phosphoglucosamine mutase (Ectopseudomonas mendocina (strain ymp) (Pseudomonas mendocina)).